The sequence spans 261 residues: Global transcriptional regulator CodY (261 aa).

The interval 1–159 (MANLLDKTRK…ASTVVGLQLL (159 aa)) is GAF domain. Residues 207–226 (ASVIADRIGITRSVIVNALR) constitute a DNA-binding region (H-T-H motif).

Belongs to the CodY family.

It localises to the cytoplasm. Its function is as follows. DNA-binding global transcriptional regulator which is involved in the adaptive response to starvation and acts by directly or indirectly controlling the expression of numerous genes in response to nutrient availability. During rapid exponential growth, CodY is highly active and represses genes whose products allow adaptation to nutrient depletion. This chain is Global transcriptional regulator CodY, found in Streptococcus thermophilus (strain CNRZ 1066).